We begin with the raw amino-acid sequence, 239 residues long: ATP-dependent dethiobiotin synthetase BioD (239 aa).

An ATP-binding site is contributed by 13-18; sequence EIGKTV. A Mg(2+)-binding site is contributed by threonine 17. Lysine 38 is an active-site residue. Position 42 (threonine 42) interacts with substrate. Lysine 59 and glutamate 111 together coordinate Mg(2+). Residues 111–114, 175–176, and 204–206 contribute to the ATP site; these read EGAG, NQ, and PSL.

The protein belongs to the dethiobiotin synthetase family. In terms of assembly, homodimer. The cofactor is Mg(2+).

It is found in the cytoplasm. It carries out the reaction (7R,8S)-7,8-diammoniononanoate + CO2 + ATP = (4R,5S)-dethiobiotin + ADP + phosphate + 3 H(+). It functions in the pathway cofactor biosynthesis; biotin biosynthesis; biotin from 7,8-diaminononanoate: step 1/2. Functionally, catalyzes a mechanistically unusual reaction, the ATP-dependent insertion of CO2 between the N7 and N8 nitrogen atoms of 7,8-diaminopelargonic acid (DAPA, also called 7,8-diammoniononanoate) to form a ureido ring. This is ATP-dependent dethiobiotin synthetase BioD from Geobacillus sp. (strain WCH70).